A 265-amino-acid polypeptide reads, in one-letter code: 5'-nucleotidase SurE (265 aa).

Residues Asp-8, Asp-9, Ser-40, and Asn-98 each contribute to the a divalent metal cation site.

It belongs to the SurE nucleotidase family. A divalent metal cation serves as cofactor.

It is found in the cytoplasm. It carries out the reaction a ribonucleoside 5'-phosphate + H2O = a ribonucleoside + phosphate. Functionally, nucleotidase that shows phosphatase activity on nucleoside 5'-monophosphates. The chain is 5'-nucleotidase SurE from Trichormus variabilis (strain ATCC 29413 / PCC 7937) (Anabaena variabilis).